The sequence spans 337 residues: 1-aminocyclopropane-1-carboxylate deaminase (337 aa).

Lysine 50 is subject to N6-(pyridoxal phosphate)lysine. Catalysis depends on serine 77, which acts as the Nucleophile.

It belongs to the ACC deaminase/D-cysteine desulfhydrase family. Homotrimer. Pyridoxal 5'-phosphate is required as a cofactor.

It catalyses the reaction 1-aminocyclopropane-1-carboxylate + H2O = 2-oxobutanoate + NH4(+). Its function is as follows. Catalyzes a cyclopropane ring-opening reaction, the irreversible conversion of 1-aminocyclopropane-1-carboxylate (ACC) to ammonia and alpha-ketobutyrate. Allows growth on ACC as a nitrogen source. In Bradyrhizobium diazoefficiens (strain JCM 10833 / BCRC 13528 / IAM 13628 / NBRC 14792 / USDA 110), this protein is 1-aminocyclopropane-1-carboxylate deaminase.